The primary structure comprises 160 residues: Ribosomal RNA large subunit methyltransferase H (160 aa).

S-adenosyl-L-methionine-binding positions include leucine 76, glycine 108, and 127 to 132 (LGKMTW).

The protein belongs to the RNA methyltransferase RlmH family. Homodimer.

The protein localises to the cytoplasm. The catalysed reaction is pseudouridine(1915) in 23S rRNA + S-adenosyl-L-methionine = N(3)-methylpseudouridine(1915) in 23S rRNA + S-adenosyl-L-homocysteine + H(+). Specifically methylates the pseudouridine at position 1915 (m3Psi1915) in 23S rRNA. The protein is Ribosomal RNA large subunit methyltransferase H of Rhizobium rhizogenes (strain K84 / ATCC BAA-868) (Agrobacterium radiobacter).